Reading from the N-terminus, the 369-residue chain is Anthranilate phosphoribosyltransferase (369 aa).

Residues glycine 99, 102–103, 109–112, 127–135, and serine 139 each bind 5-phospho-alpha-D-ribose 1-diphosphate; these read GD, NVST, and KHGNRGVSS. Glycine 99 provides a ligand contact to anthranilate. Serine 111 is a Mg(2+) binding site. Asparagine 130 provides a ligand contact to anthranilate. Arginine 185 lines the anthranilate pocket. Aspartate 244 and glutamate 245 together coordinate Mg(2+).

It belongs to the anthranilate phosphoribosyltransferase family. In terms of assembly, homodimer. It depends on Mg(2+) as a cofactor.

It catalyses the reaction N-(5-phospho-beta-D-ribosyl)anthranilate + diphosphate = 5-phospho-alpha-D-ribose 1-diphosphate + anthranilate. The protein operates within amino-acid biosynthesis; L-tryptophan biosynthesis; L-tryptophan from chorismate: step 2/5. Catalyzes the transfer of the phosphoribosyl group of 5-phosphorylribose-1-pyrophosphate (PRPP) to anthranilate to yield N-(5'-phosphoribosyl)-anthranilate (PRA). The chain is Anthranilate phosphoribosyltransferase from Psychrobacter sp. (strain PRwf-1).